The chain runs to 359 residues: UPF0284 protein MAE_56900 (359 aa).

The protein belongs to the UPF0284 family.

The polypeptide is UPF0284 protein MAE_56900 (Microcystis aeruginosa (strain NIES-843 / IAM M-2473)).